The sequence spans 67 residues: Conotoxin ArMLKM-01 (67 aa).

The first 24 residues, 1–24, serve as a signal peptide directing secretion; it reads MLKMEVVLFTFLVLFPLSTLQLET. Residues 25–51 constitute a propeptide that is removed on maturation; that stretch reads DQPVERYVENKQDLNPDESRNFMLPIV. 3 cysteine pairs are disulfide-bonded: Cys-54/Cys-65, Cys-55/Cys-63, and Cys-58/Cys-66.

This sequence belongs to the conotoxin M superfamily. As to expression, expressed by the venom duct.

It localises to the secreted. The protein is Conotoxin ArMLKM-01 of Conus arenatus (Sand-dusted cone).